Consider the following 395-residue polypeptide: Acetate kinase (395 aa).

Position 7 (Asn7) interacts with Mg(2+). Lys14 lines the ATP pocket. Position 92 (Arg92) interacts with substrate. The active-site Proton donor/acceptor is Asp149. ATP is bound by residues 207-211 (HLGNG), 282-284 (DMR), and 329-333 (GIGEN). Glu382 contributes to the Mg(2+) binding site.

It belongs to the acetokinase family. In terms of assembly, homodimer. Requires Mg(2+) as cofactor. It depends on Mn(2+) as a cofactor.

The protein localises to the cytoplasm. It catalyses the reaction acetate + ATP = acetyl phosphate + ADP. It functions in the pathway metabolic intermediate biosynthesis; acetyl-CoA biosynthesis; acetyl-CoA from acetate: step 1/2. Functionally, catalyzes the formation of acetyl phosphate from acetate and ATP. Can also catalyze the reverse reaction. The polypeptide is Acetate kinase (Brachyspira hyodysenteriae (strain ATCC 49526 / WA1)).